The sequence spans 205 residues: Holliday junction branch migration complex subunit RuvA (205 aa).

The tract at residues 1–65 (MIGRLRGAVA…SAGLRLYGFL (65 aa)) is domain I. Residues 66–144 (TREDRRAFVL…TDGPVLMSAP (79 aa)) are domain II. The tract at residues 145–153 (TSSAPSAPA) is flexible linker. Residues 153-205 (AKPAPTGDAVAALMGLGVAEVNARRVVEAAAAELGEEATVQALIKAGLKELGR) form a domain III region.

This sequence belongs to the RuvA family. As to quaternary structure, homotetramer. Forms an RuvA(8)-RuvB(12)-Holliday junction (HJ) complex. HJ DNA is sandwiched between 2 RuvA tetramers; dsDNA enters through RuvA and exits via RuvB. An RuvB hexamer assembles on each DNA strand where it exits the tetramer. Each RuvB hexamer is contacted by two RuvA subunits (via domain III) on 2 adjacent RuvB subunits; this complex drives branch migration. In the full resolvosome a probable DNA-RuvA(4)-RuvB(12)-RuvC(2) complex forms which resolves the HJ.

The protein resides in the cytoplasm. The RuvA-RuvB-RuvC complex processes Holliday junction (HJ) DNA during genetic recombination and DNA repair, while the RuvA-RuvB complex plays an important role in the rescue of blocked DNA replication forks via replication fork reversal (RFR). RuvA specifically binds to HJ cruciform DNA, conferring on it an open structure. The RuvB hexamer acts as an ATP-dependent pump, pulling dsDNA into and through the RuvAB complex. HJ branch migration allows RuvC to scan DNA until it finds its consensus sequence, where it cleaves and resolves the cruciform DNA. The sequence is that of Holliday junction branch migration complex subunit RuvA from Caulobacter vibrioides (strain ATCC 19089 / CIP 103742 / CB 15) (Caulobacter crescentus).